Consider the following 185-residue polypeptide: Ribosome-recycling factor (185 aa).

It belongs to the RRF family.

The protein resides in the cytoplasm. Functionally, responsible for the release of ribosomes from messenger RNA at the termination of protein biosynthesis. May increase the efficiency of translation by recycling ribosomes from one round of translation to another. The protein is Ribosome-recycling factor of Aliarcobacter butzleri (strain RM4018) (Arcobacter butzleri).